A 238-amino-acid chain; its full sequence is Monocyte to macrophage differentiation factor (238 aa).

Residues 1 to 28 are Cytoplasmic-facing; it reads MRFKNRFQRFMNHRAPANGRYKPTCYEH. A helical membrane pass occupies residues 29-49; sequence AANCYTHAFLIVPAIVGSALL. The Lumenal segment spans residues 50-61; the sequence is HRLSDDCWEKIT. A helical membrane pass occupies residues 62 to 82; sequence AWIYGMGLCALFIVSTVFHIV. At 83-101 the chain is on the cytoplasmic side; the sequence is SWKKSHLRTVEHCFHMCDR. The helical transmembrane segment at 102-122 threads the bilayer; the sequence is MVIYFFIAASYAPWLNLRELG. Residues 123-124 are Lumenal-facing; it reads PL. A helical transmembrane segment spans residues 125 to 145; the sequence is ASHMRWFIWLMAAGGTIYVFL. Over 146 to 151 the chain is Cytoplasmic; that stretch reads YHEKYK. Residues 152–172 form a helical membrane-spanning segment; it reads VVELFFYLTMGFSPALVVTSM. Residues 173–174 are Lumenal-facing; it reads NN. Residues 175–195 traverse the membrane as a helical segment; sequence TDGLQELACGGLIYCLGVVFF. The Cytoplasmic segment spans residues 196 to 198; it reads KSD. A helical membrane pass occupies residues 199-219; the sequence is GIIPFAHAIWHLFVATAAAVH. At 220 to 238 the chain is on the lumenal side; that stretch reads YYAIWKYLYRSPTDFMRHL.

This sequence belongs to the ADIPOR family. As to expression, exhibits relatively ubiquitous expression with preferential expression in mature (in vitro differentiated) macrophages.

The protein localises to the late endosome membrane. The protein resides in the lysosome membrane. In terms of biological role, involved in the dynamics of lysosomal membranes associated with microglial activation following brain lesion. This chain is Monocyte to macrophage differentiation factor, found in Homo sapiens (Human).